Here is a 392-residue protein sequence, read N- to C-terminus: NADH-quinone oxidoreductase subunit D (392 aa).

It belongs to the complex I 49 kDa subunit family. NDH-1 is composed of 14 different subunits. Subunits NuoB, C, D, E, F, and G constitute the peripheral sector of the complex.

The protein localises to the cell inner membrane. It catalyses the reaction a quinone + NADH + 5 H(+)(in) = a quinol + NAD(+) + 4 H(+)(out). NDH-1 shuttles electrons from NADH, via FMN and iron-sulfur (Fe-S) centers, to quinones in the respiratory chain. The immediate electron acceptor for the enzyme in this species is believed to be ubiquinone. Couples the redox reaction to proton translocation (for every two electrons transferred, four hydrogen ions are translocated across the cytoplasmic membrane), and thus conserves the redox energy in a proton gradient. The sequence is that of NADH-quinone oxidoreductase subunit D from Paramagnetospirillum magneticum (strain ATCC 700264 / AMB-1) (Magnetospirillum magneticum).